The following is a 301-amino-acid chain: Protein p34 (301 aa).

A run of 5 helical transmembrane segments spans residues 15–35 (YLSVTTALIILSIKLYAWVVT), 40–60 (ILAALIDSMLDITSSFINLIA), 83–103 (TIFSQSIFFFASAFFVGFSSV), 120–140 (TVMYVCIFLTIILVFYQTYVI), and 171–191 (LSDYFWFVDPLFGVVISLYIF).

This sequence belongs to the cation diffusion facilitator (CDF) transporter (TC 2.A.4) family.

The protein localises to the cell membrane. This chain is Protein p34 (p34), found in Rickettsia rickettsii (strain Sheila Smith).